The sequence spans 317 residues: Cytochrome c biogenesis protein CcsA (317 aa).

The next 8 helical transmembrane spans lie at 17–37, 44–64, 71–91, 101–121, 143–163, 223–243, 252–272, and 284–304; these read VVSI…IVGL, GMIV…IYSG, LYES…LPYL, ITSP…LTQI, MILS…LLVI, IISI…VWAN, WDPK…YLHI, and AIVA…INIL.

This sequence belongs to the CcmF/CycK/Ccl1/NrfE/CcsA family. May interact with Ccs1.

Its subcellular location is the plastid. The protein localises to the chloroplast thylakoid membrane. In terms of biological role, required during biogenesis of c-type cytochromes (cytochrome c6 and cytochrome f) at the step of heme attachment. In Pelargonium hortorum (Common geranium), this protein is Cytochrome c biogenesis protein CcsA.